Consider the following 804-residue polypeptide: Phenylalanine--tRNA ligase beta subunit (804 aa).

Residues 39–155 enclose the tRNA-binding domain; it reads AEGLKKIVVG…ADVKPGEEVY (117 aa). The B5 domain occupies 408 to 483; that stretch reads RNPSVVKTTV…RIYGYDNLKS (76 aa). Residues Asp-461, Asp-467, Glu-470, and Glu-471 each coordinate Mg(2+). Positions 711 to 804 constitute an FDX-ACB domain; sequence PKFPAIERDL…LKESLKIKVR (94 aa).

It belongs to the phenylalanyl-tRNA synthetase beta subunit family. Type 1 subfamily. Tetramer of two alpha and two beta subunits. The cofactor is Mg(2+).

It localises to the cytoplasm. It catalyses the reaction tRNA(Phe) + L-phenylalanine + ATP = L-phenylalanyl-tRNA(Phe) + AMP + diphosphate + H(+). The sequence is that of Phenylalanine--tRNA ligase beta subunit from Lactobacillus johnsonii (strain CNCM I-12250 / La1 / NCC 533).